The sequence spans 438 residues: Coenzyme A disulfide reductase (438 aa).

Gly8 to Glu33 contributes to the FAD binding site. Substrate is bound by residues Thr15, Gln19, Arg22, Ser39, and Asn42. Catalysis depends on Cys43, which acts as the Nucleophile. The Redox-active role is filled by Cys43. Lys71 contacts substrate. An NADP(+)-binding site is contributed by Ala151 to Asn166. Thr267–Asp277 is an FAD binding site. His299 serves as a coordination point for substrate. Position 419 (Tyr419) interacts with FAD. Lys427 lines the substrate pocket.

It belongs to the class-III pyridine nucleotide-disulfide oxidoreductase family. Homodimer. Requires FAD as cofactor.

It carries out the reaction NADP(+) + 2 CoA = CoA-disulfide + NADPH + H(+). Functionally, catalyzes specifically the NADPH-dependent reduction of coenzyme A disulfide. The protein is Coenzyme A disulfide reductase of Staphylococcus epidermidis (strain ATCC 35984 / DSM 28319 / BCRC 17069 / CCUG 31568 / BM 3577 / RP62A).